The sequence spans 154 residues: SsrA-binding protein (154 aa).

Positions 131–154 are disordered; the sequence is DKRQDLKQKEAKRDIERAFKERQQ. A compositionally biased stretch (basic and acidic residues) spans 132–154; it reads KRQDLKQKEAKRDIERAFKERQQ.

This sequence belongs to the SmpB family.

It localises to the cytoplasm. Required for rescue of stalled ribosomes mediated by trans-translation. Binds to transfer-messenger RNA (tmRNA), required for stable association of tmRNA with ribosomes. tmRNA and SmpB together mimic tRNA shape, replacing the anticodon stem-loop with SmpB. tmRNA is encoded by the ssrA gene; the 2 termini fold to resemble tRNA(Ala) and it encodes a 'tag peptide', a short internal open reading frame. During trans-translation Ala-aminoacylated tmRNA acts like a tRNA, entering the A-site of stalled ribosomes, displacing the stalled mRNA. The ribosome then switches to translate the ORF on the tmRNA; the nascent peptide is terminated with the 'tag peptide' encoded by the tmRNA and targeted for degradation. The ribosome is freed to recommence translation, which seems to be the essential function of trans-translation. The chain is SsrA-binding protein from Listeria innocua serovar 6a (strain ATCC BAA-680 / CLIP 11262).